We begin with the raw amino-acid sequence, 321 residues long: Mitochondrial thiamine pyrophosphate carrier 1 (321 aa).

Transmembrane regions (helical) follow at residues 12 to 28 (GTRRQVVLAGGIAGLVS), 91 to 107 (LMYVCYGVIQFSAYRTT), 126 to 146 (FVAGATAGGLATASTYPLDLL), 184 to 200 (AAVGQIVPYMGLFFATY), 221 to 237 (AAGVIASVSSKTVMFPL), and 284 to 301 (GLTVSLFKAAPASAVTMW). Solcar repeat units lie at residues 12–110 (GTRR…TTQA), 120–206 (PPSA…LRPP), and 214–309 (PFGS…SLRL).

The protein belongs to the mitochondrial carrier (TC 2.A.29) family.

The protein resides in the mitochondrion inner membrane. Mitochondrial transporter that mediates uptake of thiamine pyrophosphate (ThPP) into mitochondria. This Aspergillus niger (strain ATCC MYA-4892 / CBS 513.88 / FGSC A1513) protein is Mitochondrial thiamine pyrophosphate carrier 1 (tpc1).